A 521-amino-acid polypeptide reads, in one-letter code: GMP synthase [glutamine-hydrolyzing] (521 aa).

The region spanning 5 to 203 (KILILDFGSQ…VHEICGCGND (199 aa)) is the Glutamine amidotransferase type-1 domain. The Nucleophile role is filled by Cys82. Catalysis depends on residues His177 and Glu179. A GMPS ATP-PPase domain is found at 204 to 396 (WNMPDYISEA…LGLPHDMVYR (193 aa)). An ATP-binding site is contributed by 231 to 237 (SGGVDSS).

In terms of assembly, homodimer.

It carries out the reaction XMP + L-glutamine + ATP + H2O = GMP + L-glutamate + AMP + diphosphate + 2 H(+). Its pathway is purine metabolism; GMP biosynthesis; GMP from XMP (L-Gln route): step 1/1. Its function is as follows. Catalyzes the synthesis of GMP from XMP. The sequence is that of GMP synthase [glutamine-hydrolyzing] from Azoarcus sp. (strain BH72).